The following is a 161-amino-acid chain: Hydrogenase expression/formation protein HoxO (161 aa).

This sequence belongs to the HupG/HyaE family.

The sequence is that of Hydrogenase expression/formation protein HoxO (hoxO) from Cupriavidus necator (strain ATCC 17699 / DSM 428 / KCTC 22496 / NCIMB 10442 / H16 / Stanier 337) (Ralstonia eutropha).